The chain runs to 280 residues: Hemin import ATP-binding protein HmuV (280 aa).

The ABC transporter domain occupies 26–260 (LAAAGGLRVH…GLLSEVYDQP (235 aa)). 59-66 (GPNGAGKS) lines the ATP pocket.

Belongs to the ABC transporter superfamily. Heme (hemin) importer (TC 3.A.1.14.5) family. In terms of assembly, the complex is composed of two ATP-binding proteins (HmuV), two transmembrane proteins (HmuU) and a solute-binding protein (HmuT).

Its subcellular location is the cell membrane. Its function is as follows. Part of the ABC transporter complex HmuTUV involved in hemin import. Responsible for energy coupling to the transport system. This Streptomyces coelicolor (strain ATCC BAA-471 / A3(2) / M145) protein is Hemin import ATP-binding protein HmuV.